A 61-amino-acid chain; its full sequence is MAKKSLIAKNKRPAKFSTQAYTRCERCGRPHSVYRKFKLCRVCFRQLAHRGQIPGVTKASW.

Zn(2+) is bound by residues cysteine 24, cysteine 27, cysteine 40, and cysteine 43.

It belongs to the universal ribosomal protein uS14 family. Zinc-binding uS14 subfamily. Part of the 30S ribosomal subunit. Contacts proteins S3 and S10. Zn(2+) serves as cofactor.

Its function is as follows. Binds 16S rRNA, required for the assembly of 30S particles and may also be responsible for determining the conformation of the 16S rRNA at the A site. The chain is Small ribosomal subunit protein uS14 from Streptococcus thermophilus (strain ATCC BAA-491 / LMD-9).